Here is a 264-residue protein sequence, read N- to C-terminus: Homeobox protein vent1 (264 aa).

Composition is skewed to basic and acidic residues over residues 16-26 and 44-59; these read KEEATDGKDSM and YAKE…DVQE. A disordered region spans residues 16-140; sequence KEEATDGKDS…RLRTAFTPQQ (125 aa). The segment covering 60–80 has biased composition (polar residues); the sequence is HTTSFQCSLGEQVINRPSANP. The segment covering 117–130 has biased composition (basic and acidic residues); it reads TEQREKSPKSDLQR. The segment at residues 129–188 is a DNA-binding region (homeobox); that stretch reads QRRLRTAFTPQQISKLEQAFNKQRYLGAPERKKLATSLQLSEIQVKTWFQNRRMKLKRQI.

Expressed in the ventral marginal zone of gastrulae. At stage 11.5, also expressed in the ventral region of the animal cap (ectoderm). At the end of gastrulation, predominantly localized to the ventral and lateral regions of the closing slit blastopore. At early tail bud stage, expression is maintained only in the forming proctodeum.

It is found in the nucleus. Functionally, transcriptional repressor. Cooperates with vent2 in a ventral signaling pathway downstream of bmp4, which antagonizes the Spemann organizer and dorsal mesoderm formation, and leads to ventral mesoderm formation. Acts downstream of bmp4 to repress transcription of foxa4-B/XFD-1'. Binds to DNA with preference for the target sequence 5'-CTATT[T/C]G-3'. Also binds 5'-TGCATTTTG-3' at a lower frequency, and occasionally 5'-TTGATC-3'. Binds to the homeobox 2 (HBX2) repressor element in the promoter of the myf5 gene and represses myf5 transcription in the ventral domain. The chain is Homeobox protein vent1 (vent1) from Xenopus laevis (African clawed frog).